A 201-amino-acid polypeptide reads, in one-letter code: Large ribosomal subunit protein uL4 (201 aa).

The segment at 43–73 (SRGQKTRAEVTGSGKKPWRQKGTGRARSGSV) is disordered.

This sequence belongs to the universal ribosomal protein uL4 family. In terms of assembly, part of the 50S ribosomal subunit.

Functionally, one of the primary rRNA binding proteins, this protein initially binds near the 5'-end of the 23S rRNA. It is important during the early stages of 50S assembly. It makes multiple contacts with different domains of the 23S rRNA in the assembled 50S subunit and ribosome. Forms part of the polypeptide exit tunnel. This Sodalis glossinidius (strain morsitans) protein is Large ribosomal subunit protein uL4.